The sequence spans 496 residues: Membrane-bound lytic murein transglycosylase F (496 aa).

The signal sequence occupies residues 1–29 (MFFRPDFRPRCAKWLIATGLFLMLGACVE). The interval 30–267 (KPTTLERVKE…RLKDRYYGHV (238 aa)) is non-LT domain. The segment at 268–496 (DVLGYVGAYT…SGSSPDKPAL (229 aa)) is LT domain. Residue Glu-314 is part of the active site. The interval 464-496 (VADGNLHVPGVDKTQPPAPPAPASGSSPDKPAL) is disordered. The span at 486-496 (ASGSSPDKPAL) shows a compositional bias: low complexity.

The protein in the N-terminal section; belongs to the bacterial solute-binding protein 3 family. This sequence in the C-terminal section; belongs to the transglycosylase Slt family.

The protein localises to the cell outer membrane. It carries out the reaction Exolytic cleavage of the (1-&gt;4)-beta-glycosidic linkage between N-acetylmuramic acid (MurNAc) and N-acetylglucosamine (GlcNAc) residues in peptidoglycan, from either the reducing or the non-reducing ends of the peptidoglycan chains, with concomitant formation of a 1,6-anhydrobond in the MurNAc residue.. Functionally, murein-degrading enzyme that degrades murein glycan strands and insoluble, high-molecular weight murein sacculi, with the concomitant formation of a 1,6-anhydromuramoyl product. Lytic transglycosylases (LTs) play an integral role in the metabolism of the peptidoglycan (PG) sacculus. Their lytic action creates space within the PG sacculus to allow for its expansion as well as for the insertion of various structures such as secretion systems and flagella. The protein is Membrane-bound lytic murein transglycosylase F of Pseudomonas savastanoi pv. phaseolicola (strain 1448A / Race 6) (Pseudomonas syringae pv. phaseolicola (strain 1448A / Race 6)).